The following is a 103-amino-acid chain: Nucleoid-associated protein A2cp1_3777 (103 aa).

Belongs to the YbaB/EbfC family. Homodimer.

The protein resides in the cytoplasm. It localises to the nucleoid. Its function is as follows. Binds to DNA and alters its conformation. May be involved in regulation of gene expression, nucleoid organization and DNA protection. The protein is Nucleoid-associated protein A2cp1_3777 of Anaeromyxobacter dehalogenans (strain 2CP-1 / ATCC BAA-258).